Consider the following 454-residue polypeptide: MIGKVFRIHMVGIGGTGMCGIAEVLLNLGFEVRGSDMNDSPSVRRLRRLGADIFIGHGAENVTDAQVLVKSTAVSMDNPEVQAAQEKGIPIIPRAEMLAELMRLRKGIAIAGTHGKTTTTSLTAAIFDEAGTDPTVIIGGRLNAYGSNARLGEGEFLLAEADESDGSFLCLSPVVNVVTNVDLDHVDFYHDQQAIDTAFINFMNKVPFYGMNVVCGDDAGVRRLLPQIKRPVLTYGFGPDNQLRAETVTCGETSRFRVLLHGEDLGEVNLVQPGRHNVLNALAAIGVGLETGIAADVCLRGLANFRGVGRRFERKGERGGVLVVDDYGHHPAEIAATLATARTCYPGRRLVVAFQPHRFSRTKALFGDFCKAFDNVDKLLLTEIYPASEAPIPGVSGQSLAQGIRQVSNTDVDYFQDFDAMRAALPETLRPGDLFLTLGAGSIWTVGQFYLDGE.

ATP is bound at residue 112-118 (GTHGKTT).

This sequence belongs to the MurCDEF family.

The protein resides in the cytoplasm. It carries out the reaction UDP-N-acetyl-alpha-D-muramate + L-alanine + ATP = UDP-N-acetyl-alpha-D-muramoyl-L-alanine + ADP + phosphate + H(+). Its pathway is cell wall biogenesis; peptidoglycan biosynthesis. Its function is as follows. Cell wall formation. This chain is UDP-N-acetylmuramate--L-alanine ligase, found in Oleidesulfovibrio alaskensis (strain ATCC BAA-1058 / DSM 17464 / G20) (Desulfovibrio alaskensis).